The sequence spans 208 residues: High frequency lysogenization protein HflD homolog (208 aa).

Belongs to the HflD family.

The protein resides in the cytoplasm. It localises to the cell inner membrane. The chain is High frequency lysogenization protein HflD homolog from Photorhabdus laumondii subsp. laumondii (strain DSM 15139 / CIP 105565 / TT01) (Photorhabdus luminescens subsp. laumondii).